The chain runs to 327 residues: Phosphate acyltransferase (327 aa).

Belongs to the PlsX family. Homodimer. Probably interacts with PlsY.

The protein localises to the cytoplasm. The enzyme catalyses a fatty acyl-[ACP] + phosphate = an acyl phosphate + holo-[ACP]. It functions in the pathway lipid metabolism; phospholipid metabolism. In terms of biological role, catalyzes the reversible formation of acyl-phosphate (acyl-PO(4)) from acyl-[acyl-carrier-protein] (acyl-ACP). This enzyme utilizes acyl-ACP as fatty acyl donor, but not acyl-CoA. The sequence is that of Phosphate acyltransferase from Thermotoga maritima (strain ATCC 43589 / DSM 3109 / JCM 10099 / NBRC 100826 / MSB8).